The chain runs to 539 residues: Probable K(+)/H(+) antiporter subunit D (539 aa).

The next 14 helical transmembrane spans lie at 4–23, 36–58, 78–100, 113–135, 140–162, 175–197, 217–239, 251–273, 283–305, 312–331, 335–357, 400–422, 442–464, and 484–506; these read WLDHLLILPILLPLAVAAVL, AIGFASTLVVFILSMILMRLAAA, FGIVLVLDRLSALMLCLTSGLAL, AGHHFHSLFQLLVAGLNGAFLTG, LFVFFEMMLAASYGLLLHGSGPL, LAASALFLIGVSLIYGAAGTLNM, MGSAILGVAFLVKAGMWPLSFWL, AGVFAVLTKVGIYVIIRLHLLVF, FGQEWLVTGGMLTIAFGGIGVLA, LAGYSVLVSSGTLLAAVGLG, MLAGALFYLVSSTLTIGAFFLLI, VLGLCFCLCALLLAGLPPLSGFI, AMSAADWTYVTLLILSGLAAMIA, and VVVIEITPVVVLLGACIFLSLQA.

It belongs to the CPA3 antiporters (TC 2.A.63) subunit D family. In terms of assembly, may form a hetero-oligomeric complex that consists of six subunits: PhaAB, PhaC, PhaD, PhaE, PhaF and PhaG.

It is found in the cell membrane. In terms of biological role, part of a K(+) efflux system which is required for the adaptation of R.meliloti to alkaline pH as well as for the infection process during symbiotic nodule development. The polypeptide is Probable K(+)/H(+) antiporter subunit D (phaD) (Rhizobium meliloti (strain 1021) (Ensifer meliloti)).